The sequence spans 312 residues: HPr kinase/phosphorylase (312 aa).

Residues H139 and K160 contribute to the active site. 154 to 161 contributes to the ATP binding site; it reads GSSGVGKS. S161 provides a ligand contact to Mg(2+). The Proton acceptor; for phosphorylation activity. Proton donor; for dephosphorylation activity role is filled by D178. The segment at 202-211 is important for the catalytic mechanism of both phosphorylation and dephosphorylation; that stretch reads LEIRGLGIIN. E203 is a Mg(2+) binding site. R244 is a catalytic residue. Residues 265–270 form an important for the catalytic mechanism of dephosphorylation region; that stretch reads PVRPGR.

The protein belongs to the HPrK/P family. In terms of assembly, homohexamer. Mg(2+) serves as cofactor.

The enzyme catalyses [HPr protein]-L-serine + ATP = [HPr protein]-O-phospho-L-serine + ADP + H(+). It catalyses the reaction [HPr protein]-O-phospho-L-serine + phosphate + H(+) = [HPr protein]-L-serine + diphosphate. In terms of biological role, catalyzes the ATP- as well as the pyrophosphate-dependent phosphorylation of a specific serine residue in HPr, a phosphocarrier protein of the phosphoenolpyruvate-dependent sugar phosphotransferase system (PTS). HprK/P also catalyzes the pyrophosphate-producing, inorganic phosphate-dependent dephosphorylation (phosphorolysis) of seryl-phosphorylated HPr (P-Ser-HPr). The two antagonistic activities of HprK/P are regulated by several intracellular metabolites, which change their concentration in response to the absence or presence of rapidly metabolisable carbon sources (glucose, fructose, etc.) in the growth medium. Therefore, by controlling the phosphorylation state of HPr, HPrK/P is a sensor enzyme that plays a major role in the regulation of carbon metabolism and sugar transport: it mediates carbon catabolite repression (CCR), and regulates PTS-catalyzed carbohydrate uptake and inducer exclusion. The chain is HPr kinase/phosphorylase from Listeria innocua serovar 6a (strain ATCC BAA-680 / CLIP 11262).